The chain runs to 234 residues: Glutathione S-transferase 1 (234 aa).

The 88-residue stretch at 3-90 (LPIIKVHWLD…YVLQHFDHSH (88 aa)) folds into the GST N-terminal domain. Positions 96–234 (DADIADQINY…EKARALGSNF (139 aa)) constitute a GST C-terminal domain.

Belongs to the GST superfamily. As to quaternary structure, homodimer.

It is found in the endoplasmic reticulum membrane. The enzyme catalyses RX + glutathione = an S-substituted glutathione + a halide anion + H(+). This chain is Glutathione S-transferase 1 (GTT1), found in Saccharomyces cerevisiae (strain ATCC 204508 / S288c) (Baker's yeast).